The sequence spans 259 residues: MASSQRYFALLALFAVSLKFCYCQNETIDVAGSGTAGVTWYGEPFGAGSTGGACGYGSAVANPPLYAMVSAGGPSLFNNGKGCGTCYQVVCIGHPACSGSPITVTITDECPGGPCASEPVHIDLSGKAMGALAKPGQADQLRSAGVIRVNYKRAACLYRGTNIVFRMDAGANPYYISFVVEYENGDGDLSNVEIQPAGGSFISMQEMRSAVWKVNSGSALRGPFNIRLTSGESHKVIVAYNVIPANWKPDESYRSIVNF.

An N-terminal signal peptide occupies residues 1 to 23; that stretch reads MASSQRYFALLALFAVSLKFCYC. N25 is a glycosylation site (N-linked (GlcNAc...) asparagine). The Expansin-like EG45 domain occupies 51 to 161; that stretch reads GGACGYGSAV…KRAACLYRGT (111 aa). 3 disulfides stabilise this stretch: C54/C83, C86/C156, and C91/C97. An Expansin-like CBD domain is found at 174–255; the sequence is YYISFVVEYE…NWKPDESYRS (82 aa).

The protein belongs to the expansin family. Expansin B subfamily.

Its subcellular location is the secreted. It localises to the cell wall. It is found in the membrane. In terms of biological role, may cause loosening and extension of plant cell walls by disrupting non-covalent bonding between cellulose microfibrils and matrix glucans. No enzymatic activity has been found. The protein is Expansin-B4 (EXPB4) of Arabidopsis thaliana (Mouse-ear cress).